The sequence spans 330 residues: tRNA-modifying protein YgfZ (330 aa).

Residues W28 and W190 each coordinate folate.

The protein belongs to the tRNA-modifying YgfZ family.

Its subcellular location is the cytoplasm. Its function is as follows. Folate-binding protein involved in regulating the level of ATP-DnaA and in the modification of some tRNAs. It is probably a key factor in regulatory networks that act via tRNA modification, such as initiation of chromosomal replication. In Yersinia enterocolitica serotype O:8 / biotype 1B (strain NCTC 13174 / 8081), this protein is tRNA-modifying protein YgfZ.